The following is a 107-amino-acid chain: MSHSHGNASSVNDPRQPSAAKPYIPRPVAPEDLPVDYSGFIAVILGVSGVMFRYKICSWLAIIFCAQSLANMRNLENDLKQISMAMMFAIMGLVTNYLGPNRPATKK.

A compositionally biased stretch (polar residues) spans 1 to 15 (MSHSHGNASSVNDPR). A disordered region spans residues 1–25 (MSHSHGNASSVNDPRQPSAAKPYIP). The chain crosses the membrane as a helical span at residues 82 to 98 (ISMAMMFAIMGLVTNYL).

This sequence belongs to the Asterix family.

It is found in the membrane. The sequence is that of Protein Asterix from Arabidopsis thaliana (Mouse-ear cress).